The primary structure comprises 272 residues: MLTKRIIPCLDIKEGRVVKGTNFVELRDAGDPVELSKIYNEQGADELVFLDITASFEKRDIIIDVVKRTAEQVFIPLTVGGGIKTVDDFRKILRAGADKISINTSAVKTPDLIKEASEIFGTQCVVVAMDVKRKYITDSQDENLKNKNIFETKLGSCWFEVYIYGGREGTGIDAIEWAKKVEYLGAGEILLTSMDADGTKDGYDLVLTKAISENTKLPIIASGGCGNANHVVDAFTEGKADAALMASILHYRECTVNDLKKEVEKNNIPVRF.

Catalysis depends on residues aspartate 11 and aspartate 130.

The protein belongs to the HisA/HisF family. In terms of assembly, heterodimer of HisH and HisF.

It localises to the cytoplasm. The catalysed reaction is 5-[(5-phospho-1-deoxy-D-ribulos-1-ylimino)methylamino]-1-(5-phospho-beta-D-ribosyl)imidazole-4-carboxamide + L-glutamine = D-erythro-1-(imidazol-4-yl)glycerol 3-phosphate + 5-amino-1-(5-phospho-beta-D-ribosyl)imidazole-4-carboxamide + L-glutamate + H(+). The protein operates within amino-acid biosynthesis; L-histidine biosynthesis; L-histidine from 5-phospho-alpha-D-ribose 1-diphosphate: step 5/9. IGPS catalyzes the conversion of PRFAR and glutamine to IGP, AICAR and glutamate. The HisF subunit catalyzes the cyclization activity that produces IGP and AICAR from PRFAR using the ammonia provided by the HisH subunit. This is Imidazole glycerol phosphate synthase subunit HisF from Methanococcus maripaludis (strain DSM 14266 / JCM 13030 / NBRC 101832 / S2 / LL).